A 239-amino-acid polypeptide reads, in one-letter code: uncharacterized protein (239 aa).

Helical transmembrane passes span 125–144 (LAII…LILY), 149–171 (IFVL…FLFL), and 197–216 (SVLN…GILF).

The protein localises to the cell membrane. This is an uncharacterized protein from Aquifex aeolicus (strain VF5).